The sequence spans 159 residues: Large ribosomal subunit protein uL10 (159 aa).

This sequence belongs to the universal ribosomal protein uL10 family. Part of the ribosomal stalk of the 50S ribosomal subunit. The N-terminus interacts with L11 and the large rRNA to form the base of the stalk. The C-terminus forms an elongated spine to which L12 dimers bind in a sequential fashion forming a multimeric L10(L12)X complex.

Forms part of the ribosomal stalk, playing a central role in the interaction of the ribosome with GTP-bound translation factors. The chain is Large ribosomal subunit protein uL10 (rplJ) from Campylobacter jejuni subsp. jejuni serotype O:2 (strain ATCC 700819 / NCTC 11168).